Reading from the N-terminus, the 503-residue chain is MRLTVTAKEGGSIKADALVLFISTKDLKKEAGKLLRSLGADEGALKDFKASAGELVMAYRAASGKSPLRLLLAGIGDGLKLEEFRKAAEAAARKAVDLKIGILALDCSGAAQWAKQLKCKSDELAAVLAGAAQYGAYRFDRLKSGKLDKKKDESKPKGISELVFAGCGTQLGAIENGANAGMIVGSCQNAARDLVNLPGNHLSAEDLADAAREAGKRGGFEVTVFDKKKITELKMGGLLAVNKGSEQPPTFTIMDYKPEGKAKKTIALVGKGVTFDSGGISLKPAQGMEEMKSDMAGAACVIEAVEAAARLALPVRVIGFVPSTDNMPSGSAQMPGDVITTMSGITVEVGNTDAEGRLILADALTYAKQEYNPDVMIDLATLTGACIVALGYPVAGLFSNDEALADRLFKSGQASGEKVWQLPLWDEYAELIKSDVADVHNTGGRGAGSITAAKFLEKFIDGHKHWAHVDIAGPAFPTKGGSKVSGATGFGVRLLVDLLQSWS.

Mn(2+) is bound by residues Lys-271 and Asp-276. Lys-283 is a catalytic residue. Mn(2+)-binding residues include Asp-294, Asp-353, and Glu-355. Arg-357 is a catalytic residue.

Belongs to the peptidase M17 family. Mn(2+) is required as a cofactor.

The protein localises to the cytoplasm. It carries out the reaction Release of an N-terminal amino acid, Xaa-|-Yaa-, in which Xaa is preferably Leu, but may be other amino acids including Pro although not Arg or Lys, and Yaa may be Pro. Amino acid amides and methyl esters are also readily hydrolyzed, but rates on arylamides are exceedingly low.. The catalysed reaction is Release of an N-terminal amino acid, preferentially leucine, but not glutamic or aspartic acids.. Presumably involved in the processing and regular turnover of intracellular proteins. Catalyzes the removal of unsubstituted N-terminal amino acids from various peptides. This chain is Probable cytosol aminopeptidase, found in Chlorobaculum parvum (strain DSM 263 / NCIMB 8327) (Chlorobium vibrioforme subsp. thiosulfatophilum).